Reading from the N-terminus, the 107-residue chain is U1-lycotoxin-Ls1b (107 aa).

A signal peptide spans 1–20; it reads MMKVLVVVALLATLISYSSS. The propeptide occupies 21-41; it reads EGIDDLEADELLSLMANEQTR. Intrachain disulfides connect C44–C59, C51–C68, C58–C86, and C70–C84.

The protein belongs to the neurotoxin 19 (CSTX) family. 04 (U1-Lctx) subfamily. As to expression, expressed by the venom gland.

The protein localises to the secreted. The sequence is that of U1-lycotoxin-Ls1b from Lycosa singoriensis (Wolf spider).